Here is a 234-residue protein sequence, read N- to C-terminus: Ion-translocating oxidoreductase complex subunit E (234 aa).

The next 5 helical transmembrane spans lie at 62–82, 92–112, 116–136, 151–171, and 205–225; these read LGLG…ISLF, IPIY…LMNA, TLYQ…IIIG, IWDG…LGAL, and SFLL…LLAI.

Belongs to the NqrDE/RnfAE family. The complex is composed of six subunits: RnfA, RnfB, RnfC, RnfD, RnfE and RnfG.

Its subcellular location is the cell inner membrane. Part of a membrane-bound complex that couples electron transfer with translocation of ions across the membrane. The polypeptide is Ion-translocating oxidoreductase complex subunit E (Haemophilus influenzae (strain PittGG)).